A 173-amino-acid chain; its full sequence is Crossover junction endodeoxyribonuclease RuvC (173 aa).

Catalysis depends on residues Asp8, Glu67, and Asp139. Positions 8, 67, and 139 each coordinate Mg(2+).

Belongs to the RuvC family. In terms of assembly, homodimer which binds Holliday junction (HJ) DNA. The HJ becomes 2-fold symmetrical on binding to RuvC with unstacked arms; it has a different conformation from HJ DNA in complex with RuvA. In the full resolvosome a probable DNA-RuvA(4)-RuvB(12)-RuvC(2) complex forms which resolves the HJ. The cofactor is Mg(2+).

Its subcellular location is the cytoplasm. It catalyses the reaction Endonucleolytic cleavage at a junction such as a reciprocal single-stranded crossover between two homologous DNA duplexes (Holliday junction).. In terms of biological role, the RuvA-RuvB-RuvC complex processes Holliday junction (HJ) DNA during genetic recombination and DNA repair. Endonuclease that resolves HJ intermediates. Cleaves cruciform DNA by making single-stranded nicks across the HJ at symmetrical positions within the homologous arms, yielding a 5'-phosphate and a 3'-hydroxyl group; requires a central core of homology in the junction. The consensus cleavage sequence is 5'-(A/T)TT(C/G)-3'. Cleavage occurs on the 3'-side of the TT dinucleotide at the point of strand exchange. HJ branch migration catalyzed by RuvA-RuvB allows RuvC to scan DNA until it finds its consensus sequence, where it cleaves and resolves the cruciform DNA. The protein is Crossover junction endodeoxyribonuclease RuvC of Shewanella piezotolerans (strain WP3 / JCM 13877).